Here is a 367-residue protein sequence, read N- to C-terminus: Alginate lyase (367 aa).

The first 24 residues, 1–24, serve as a signal peptide directing secretion; sequence MTAFKRIFSPALLVLALYGGAAHA. Residues 63–64, 136–137, and Y254 contribute to the substrate site; these read SK and HT.

This sequence belongs to the polysaccharide lyase 5 family.

It localises to the periplasm. The catalysed reaction is Eliminative cleavage of alginate to give oligosaccharides with 4-deoxy-alpha-L-erythro-hex-4-enuronosyl groups at their non-reducing ends and beta-D-mannuronate at their reducing end.. In terms of biological role, catalyzes the depolymerization of alginate by cleaving the beta-1,4 glycosidic bond between two adjacent sugar residues via a beta-elimination mechanism. May serve to degrade mislocalized alginate that is trapped in the periplasmic space. The sequence is that of Alginate lyase from Pseudomonas putida (strain W619).